A 98-amino-acid chain; its full sequence is MAQSNLRPLHDRVVVRRVESESKTAGGIIIPDTAKEKPQEGEIIAVGSGARDEAGKLVPLDVKAGDRILFGKWSGTEVKLNGEDLLIMKEADIMGIIG.

The protein belongs to the GroES chaperonin family. As to quaternary structure, heptamer of 7 subunits arranged in a ring. Interacts with the chaperonin GroEL.

The protein localises to the cytoplasm. Its function is as follows. Together with the chaperonin GroEL, plays an essential role in assisting protein folding. The GroEL-GroES system forms a nano-cage that allows encapsulation of the non-native substrate proteins and provides a physical environment optimized to promote and accelerate protein folding. GroES binds to the apical surface of the GroEL ring, thereby capping the opening of the GroEL channel. This Mesorhizobium japonicum (strain LMG 29417 / CECT 9101 / MAFF 303099) (Mesorhizobium loti (strain MAFF 303099)) protein is Co-chaperonin GroES 3.